The chain runs to 294 residues: Glycine--tRNA ligase alpha subunit (294 aa).

It belongs to the class-II aminoacyl-tRNA synthetase family. As to quaternary structure, tetramer of two alpha and two beta subunits.

The protein resides in the cytoplasm. The enzyme catalyses tRNA(Gly) + glycine + ATP = glycyl-tRNA(Gly) + AMP + diphosphate. In Trichormus variabilis (strain ATCC 29413 / PCC 7937) (Anabaena variabilis), this protein is Glycine--tRNA ligase alpha subunit.